Consider the following 78-residue polypeptide: Neurogranin (78 aa).

Met-1 bears the N-acetylmethionine mark. A disulfide bridge links Cys-3 with Cys-51. The IQ domain occupies Ala-26–Lys-47. A Phosphoserine; by PHK and PKC modification is found at Ser-36. Residues Gly-39–Asp-78 form a disordered region. One can recognise a Collagen-like domain in the interval Ser-48 to Asp-78. Residues Lys-54–Asp-78 are compositionally biased toward gly residues. A Citrulline; partial modification is found at Arg-68. Arg-68 carries the omega-N-methylarginine modification.

Belongs to the neurogranin family. Interacts with apo-calmodulin; this interaction decreases the affinity of calmodulin for calcium ions. Disulfide bond formation is redox-sensitive. The cysteine residues are readily oxidized by several nitric acid (NO) donors and other oxidants to form intramolecular disulfide. Cys-51 can form a disulfide with any other of the cysteine residues with an order of reactivity Cys-9 &gt; Cys-4 &gt; Cys-3. In terms of processing, phosphorylated at Ser-36 by PHK and PKC, phosphorylation prevents interaction with Calmodulin and interrupts several learning- and memory-associated functions.

It is found in the cytoplasm. Its subcellular location is the synapse. The protein localises to the cell projection. The protein resides in the dendritic spine. Functionally, regulates the affinity of calmodulin for calcium. Involved in synaptic plasticity and spatial learning. The chain is Neurogranin (Nrgn) from Mus musculus (Mouse).